The chain runs to 227 residues: MADLLGSILSSMEKPPSLGDQESRRKAREQAARLKKLQEQDKQQKVEFRKRMEKEVSDFIQDSGQVKKKFQPMNKIERSILHDVVEVAGLTSFSFGEDDDCRYVMIFKKEFAPSDEELDSYRHGEEWDPQKAEEKRKLKELAQKQEEEAAQQGPAVVSPASDYKDKYSHLIGKGAAKDAAHMLQANKTYGCVPVANKRDTRSIEEAMNEIRAKKRLRQSGEELPTTS.

Positions 1–45 are disordered; it reads MADLLGSILSSMEKPPSLGDQESRRKAREQAARLKKLQEQDKQQK. Residue Ala-2 is modified to N-acetylalanine. A compositionally biased stretch (basic and acidic residues) spans 21–45; it reads QESRRKAREQAARLKKLQEQDKQQK. Positions 35–51 match the Nuclear localization signal motif; sequence KKLQEQDKQQKVEFRKR. One can recognise an R3H domain in the interval 46–109; it reads VEFRKRMEKE…DCRYVMIFKK (64 aa). Ser-114 is subject to Phosphoserine. The disordered stretch occupies residues 118–161; sequence LDSYRHGEEWDPQKAEEKRKLKELAQKQEEEAAQQGPAVVSPAS. Over residues 119–147 the composition is skewed to basic and acidic residues; the sequence is DSYRHGEEWDPQKAEEKRKLKELAQKQEE. The Nuclear localization signal motif lies at 122 to 139; that stretch reads RHGEEWDPQKAEEKRKLK. Ser-158 and Ser-202 each carry phosphoserine.

The protein resides in the nucleus. This is Sperm-associated antigen 7 (Spag7) from Mus musculus (Mouse).